We begin with the raw amino-acid sequence, 97 residues long: Plastocyanin (97 aa).

The Plastocyanin-like domain maps to 1-97 (AEVKLGADDG…AGMKGEVTVT (97 aa)). Residues His-37, Cys-82, His-85, and Met-90 each contribute to the Cu cation site.

It belongs to the plastocyanin family. Cu(2+) serves as cofactor.

Its subcellular location is the plastid. The protein localises to the chloroplast thylakoid membrane. Participates in electron transfer between P700 and the cytochrome b6-f complex in photosystem I. The sequence is that of Plastocyanin (PETE) from Daucus carota (Wild carrot).